The chain runs to 103 residues: Matrix Gla protein (103 aa).

Positions 1–19 (MKSLILLAILAALAVVTLC) are cleaved as a signal peptide. The residue at position 21 (Glu-21) is a 4-carboxyglutamate. Ser-22, Ser-25, and Ser-28 each carry phosphoserine. The region spanning 51-97 (RAKVQERIRERSKPVHELNREACDDYRLCERYAMVYGYNAAYNRYFR) is the Gla domain. Glu-56, Glu-60, Glu-67, and Glu-71 each carry 4-carboxyglutamate. Cysteines 73 and 79 form a disulfide. The propeptide at 97–103 (RKRRGTK) is removed in mature form; probably by carboxypeptidase N.

This sequence belongs to the osteocalcin/matrix Gla protein family. Post-translationally, requires vitamin K-dependent gamma-carboxylation for its function.

It is found in the secreted. Associates with the organic matrix of bone and cartilage. Thought to act as an inhibitor of bone formation. The chain is Matrix Gla protein (MGP) from Homo sapiens (Human).